Consider the following 187-residue polypeptide: Ion-translocating oxidoreductase complex subunit B (187 aa).

The tract at residues 1–26 (MTHILFAVLVLALLALAFGIILGFAA) is hydrophobic. One can recognise a 4Fe-4S domain in the interval 32-90 (EADPIVDQLDALLPQTQCGQCGYPGCKPYAEALANGDQINKCVPGGDATMRKIADLMGV). [4Fe-4S] cluster is bound by residues Cys49, Cys52, Cys57, Cys73, Cys115, Cys118, Cys121, Cys125, Cys145, Cys148, Cys151, and Cys155. 2 consecutive 4Fe-4S ferredoxin-type domains span residues 106 to 135 (KVAFIHEDQCIGCTKCIQACPVDAIVGATK) and 136 to 165 (AMHTVITDECTGCDLCVDPCPTDCIEMIPV).

This sequence belongs to the 4Fe4S bacterial-type ferredoxin family. RnfB subfamily. In terms of assembly, the complex is composed of six subunits: RnfA, RnfB, RnfC, RnfD, RnfE and RnfG. [4Fe-4S] cluster is required as a cofactor.

It is found in the cell inner membrane. Its function is as follows. Part of a membrane-bound complex that couples electron transfer with translocation of ions across the membrane. The sequence is that of Ion-translocating oxidoreductase complex subunit B from Aeromonas salmonicida (strain A449).